The following is a 418-amino-acid chain: UDP-N-acetylglucosamine 1-carboxyvinyltransferase (418 aa).

22-23 serves as a coordination point for phosphoenolpyruvate; the sequence is KN. R93 contributes to the UDP-N-acetyl-alpha-D-glucosamine binding site. The active-site Proton donor is C117. The residue at position 117 (C117) is a 2-(S-cysteinyl)pyruvic acid O-phosphothioketal. Positions 306 and 328 each coordinate UDP-N-acetyl-alpha-D-glucosamine.

This sequence belongs to the EPSP synthase family. MurA subfamily.

The protein resides in the cytoplasm. The catalysed reaction is phosphoenolpyruvate + UDP-N-acetyl-alpha-D-glucosamine = UDP-N-acetyl-3-O-(1-carboxyvinyl)-alpha-D-glucosamine + phosphate. It functions in the pathway cell wall biogenesis; peptidoglycan biosynthesis. Its function is as follows. Cell wall formation. Adds enolpyruvyl to UDP-N-acetylglucosamine. The chain is UDP-N-acetylglucosamine 1-carboxyvinyltransferase from Hydrogenovibrio crunogenus (strain DSM 25203 / XCL-2) (Thiomicrospira crunogena).